The sequence spans 360 residues: Histidinol-phosphate aminotransferase (360 aa).

At K221 the chain carries N6-(pyridoxal phosphate)lysine.

This sequence belongs to the class-II pyridoxal-phosphate-dependent aminotransferase family. Histidinol-phosphate aminotransferase subfamily. Homodimer. It depends on pyridoxal 5'-phosphate as a cofactor.

The catalysed reaction is L-histidinol phosphate + 2-oxoglutarate = 3-(imidazol-4-yl)-2-oxopropyl phosphate + L-glutamate. Its pathway is amino-acid biosynthesis; L-histidine biosynthesis; L-histidine from 5-phospho-alpha-D-ribose 1-diphosphate: step 7/9. The chain is Histidinol-phosphate aminotransferase from Desulfitobacterium hafniense (strain Y51).